A 288-amino-acid polypeptide reads, in one-letter code: Nucleotide-binding protein Mlg_2233 (288 aa).

11-18 (GLSGSGKS) is an ATP binding site. 63 to 66 (DARN) serves as a coordination point for GTP.

It belongs to the RapZ-like family.

Functionally, displays ATPase and GTPase activities. The sequence is that of Nucleotide-binding protein Mlg_2233 from Alkalilimnicola ehrlichii (strain ATCC BAA-1101 / DSM 17681 / MLHE-1).